The sequence spans 168 residues: Transcription antitermination protein NusB (168 aa).

The protein belongs to the NusB family.

Functionally, involved in transcription antitermination. Required for transcription of ribosomal RNA (rRNA) genes. Binds specifically to the boxA antiterminator sequence of the ribosomal RNA (rrn) operons. This is Transcription antitermination protein NusB from Chlamydia trachomatis serovar D (strain ATCC VR-885 / DSM 19411 / UW-3/Cx).